The following is a 492-amino-acid chain: UDP-N-acetylmuramoyl-L-alanyl-D-glutamate--2,6-diaminopimelate ligase (492 aa).

Residue serine 30 coordinates UDP-N-acetyl-alpha-D-muramoyl-L-alanyl-D-glutamate. 114 to 120 (GTNGKTS) is a binding site for ATP. Residues 156-157 (TT), serine 183, glutamine 189, and arginine 191 contribute to the UDP-N-acetyl-alpha-D-muramoyl-L-alanyl-D-glutamate site. Lysine 223 is modified (N6-carboxylysine). Residues arginine 389, 413–416 (DNPR), glycine 462, and glutamate 466 each bind meso-2,6-diaminopimelate. Positions 413–416 (DNPR) match the Meso-diaminopimelate recognition motif motif.

This sequence belongs to the MurCDEF family. MurE subfamily. Mg(2+) is required as a cofactor. In terms of processing, carboxylation is probably crucial for Mg(2+) binding and, consequently, for the gamma-phosphate positioning of ATP.

The protein localises to the cytoplasm. It carries out the reaction UDP-N-acetyl-alpha-D-muramoyl-L-alanyl-D-glutamate + meso-2,6-diaminopimelate + ATP = UDP-N-acetyl-alpha-D-muramoyl-L-alanyl-gamma-D-glutamyl-meso-2,6-diaminopimelate + ADP + phosphate + H(+). It functions in the pathway cell wall biogenesis; peptidoglycan biosynthesis. Catalyzes the addition of meso-diaminopimelic acid to the nucleotide precursor UDP-N-acetylmuramoyl-L-alanyl-D-glutamate (UMAG) in the biosynthesis of bacterial cell-wall peptidoglycan. The sequence is that of UDP-N-acetylmuramoyl-L-alanyl-D-glutamate--2,6-diaminopimelate ligase from Neisseria meningitidis serogroup B (strain ATCC BAA-335 / MC58).